Reading from the N-terminus, the 374-residue chain is Quinolinate synthase (374 aa).

Iminosuccinate-binding residues include H53 and S70. C116 lines the [4Fe-4S] cluster pocket. Iminosuccinate contacts are provided by residues 148 to 150 (YMN) and S169. C236 contacts [4Fe-4S] cluster. Iminosuccinate is bound by residues 262–264 (HPE) and T279. Position 327 (C327) interacts with [4Fe-4S] cluster.

This sequence belongs to the quinolinate synthase family. Type 3 subfamily. [4Fe-4S] cluster is required as a cofactor.

The protein resides in the cytoplasm. The catalysed reaction is iminosuccinate + dihydroxyacetone phosphate = quinolinate + phosphate + 2 H2O + H(+). The protein operates within cofactor biosynthesis; NAD(+) biosynthesis; quinolinate from iminoaspartate: step 1/1. Functionally, catalyzes the condensation of iminoaspartate with dihydroxyacetone phosphate to form quinolinate. This is Quinolinate synthase from Haloarcula marismortui (strain ATCC 43049 / DSM 3752 / JCM 8966 / VKM B-1809) (Halobacterium marismortui).